The sequence spans 350 residues: Uroporphyrinogen decarboxylase (350 aa).

Substrate-binding positions include 23 to 27 (RQAGR), aspartate 72, tyrosine 149, serine 204, and histidine 318.

This sequence belongs to the uroporphyrinogen decarboxylase family. Homodimer.

Its subcellular location is the cytoplasm. The catalysed reaction is uroporphyrinogen III + 4 H(+) = coproporphyrinogen III + 4 CO2. The protein operates within porphyrin-containing compound metabolism; protoporphyrin-IX biosynthesis; coproporphyrinogen-III from 5-aminolevulinate: step 4/4. Its function is as follows. Catalyzes the decarboxylation of four acetate groups of uroporphyrinogen-III to yield coproporphyrinogen-III. This Carboxydothermus hydrogenoformans (strain ATCC BAA-161 / DSM 6008 / Z-2901) protein is Uroporphyrinogen decarboxylase.